A 288-amino-acid chain; its full sequence is MSDRLAVLPQYLLPKQRLTLFMGRLAGARAGSLTTAVIRWFIARYGVDMSEAENPDPAAYASFNEFFTRPLRAGARPLAQADFICPVDGAISQFGAIERDQIFQAKGHRYTTTALLGGDRELATHFDHGHFATLYLSPRDYHRIHMPCAGRLTRMIHVPGELFSVNPTTARGVPGLFARNERVVCVFDGEHGPFVMVLVGATIVGSMATVWHGVVNSPRPGMIRDWRYPEGQVVLGQGEEMGRFLLGSTVVMLFPQDCLRFNAEWAPEKAIRLGEKMGDLFSCTPQAV.

Residues aspartate 88, histidine 145, and serine 248 each act as charge relay system; for autoendoproteolytic cleavage activity in the active site. The Schiff-base intermediate with substrate; via pyruvic acid; for decarboxylase activity role is filled by serine 248. Pyruvic acid (Ser); by autocatalysis is present on serine 248.

It belongs to the phosphatidylserine decarboxylase family. PSD-B subfamily. Prokaryotic type I sub-subfamily. In terms of assembly, heterodimer of a large membrane-associated beta subunit and a small pyruvoyl-containing alpha subunit. Pyruvate serves as cofactor. Post-translationally, is synthesized initially as an inactive proenzyme. Formation of the active enzyme involves a self-maturation process in which the active site pyruvoyl group is generated from an internal serine residue via an autocatalytic post-translational modification. Two non-identical subunits are generated from the proenzyme in this reaction, and the pyruvate is formed at the N-terminus of the alpha chain, which is derived from the carboxyl end of the proenzyme. The autoendoproteolytic cleavage occurs by a canonical serine protease mechanism, in which the side chain hydroxyl group of the serine supplies its oxygen atom to form the C-terminus of the beta chain, while the remainder of the serine residue undergoes an oxidative deamination to produce ammonia and the pyruvoyl prosthetic group on the alpha chain. During this reaction, the Ser that is part of the protease active site of the proenzyme becomes the pyruvoyl prosthetic group, which constitutes an essential element of the active site of the mature decarboxylase.

It localises to the cell membrane. The enzyme catalyses a 1,2-diacyl-sn-glycero-3-phospho-L-serine + H(+) = a 1,2-diacyl-sn-glycero-3-phosphoethanolamine + CO2. The protein operates within phospholipid metabolism; phosphatidylethanolamine biosynthesis; phosphatidylethanolamine from CDP-diacylglycerol: step 2/2. Functionally, catalyzes the formation of phosphatidylethanolamine (PtdEtn) from phosphatidylserine (PtdSer). This chain is Phosphatidylserine decarboxylase proenzyme, found in Azoarcus sp. (strain BH72).